The sequence spans 1551 residues: Dual oxidase 1 (1551 aa).

An N-terminal signal peptide occupies residues 1-21; sequence MGFCLALTWTFLVGSWTSMGA. At 22–596 the chain is on the extracellular side; that stretch reads QKPISWEVQR…YFEGSGFGFG (575 aa). A peroxidase-like; mediates peroxidase activity region spans residues 26–593; sequence SWEVQRFDGW…MQDYFEGSGF (568 aa). Asn94 is a glycosylation site (N-linked (GlcNAc...) asparagine). The tract at residues 197 to 222 is disordered; sequence LASGPDPAFPRNAQPPLLMWSAPDPA. Residues Asn342, Asn354, Asn461, and Asn534 are each glycosylated (N-linked (GlcNAc...) asparagine). The chain crosses the membrane as a helical span at residues 597-617; it reads VTIGTLCCFPLVSLLSAWIVA. The Cytoplasmic segment spans residues 618-1044; sequence RLRKKNFKKL…KRFIENYRRH (427 aa). 3 consecutive EF-hand domains span residues 815 to 850, 851 to 886, and 895 to 930; these read PQDM…FMKG, SPEE…FIEI, and QLTE…HDSE. Residues Asp828, Asp830, Asn832, Tyr834, Glu839, Asp864, Asp866, Asn868, and Glu875 each contribute to the Ca(2+) site. The tract at residues 956 to 1248 is interaction with TXNDC11; that stretch reads YISQEKICPS…GSFGLIQLPR (293 aa). Residues 1045–1065 traverse the membrane as a helical segment; that stretch reads IGCVAVFYAITGGLFLERAYY. At 1066–1080 the chain is on the extracellular side; it reads YAFGAHHMGITDTTR. A helical transmembrane segment spans residues 1081–1101; the sequence is VGIILSRGTAASISFMFSYIL. One can recognise a Ferric oxidoreductase domain in the interval 1087–1269; the sequence is RGTAASISFM…YVGDKLVSLS (183 aa). At 1102–1151 the chain is on the cytoplasmic side; it reads LTMCRNLITFLRETFLNRYVPFDAAVDFHRLIASTAIVLTVLHSAGHVVN. A helical transmembrane segment spans residues 1152-1172; the sequence is VYLFSISPLSVLSCLFPGLFH. The Extracellular portion of the chain corresponds to 1173-1188; that stretch reads NDGSEFPQKYYWWFFQ. Residues 1189–1209 traverse the membrane as a helical segment; sequence TVPGLTGVMLLLVLAIMYVFA. The Cytoplasmic segment spans residues 1210–1226; sequence SHHFRRHSFRGFWLTHH. The helical transmembrane segment at 1227 to 1247 threads the bilayer; the sequence is LYILLYVLLIIHGSFGLIQLP. A topological domain (extracellular) is located at residue Arg1248. The chain crosses the membrane as a helical span at residues 1249-1269; sequence FHIFFLVPALIYVGDKLVSLS. The FAD-binding FR-type domain occupies 1270-1376; sequence RKKVEISVVK…DGPFGEGHQE (107 aa). The Cytoplasmic segment spans residues 1270 to 1551; sequence RKKVEISVVK…THFSHHYENF (282 aa).

The protein in the N-terminal section; belongs to the peroxidase family. Interacts with TPO and CYBA. Interacts with TXNDC11. In terms of processing, N-glycosylated. Expressed in thyrocytes (at protein level). Specifically expressed in thyroid.

It is found in the apical cell membrane. The catalysed reaction is NADH + O2 + H(+) = H2O2 + NAD(+). The enzyme catalyses NADPH + O2 + H(+) = H2O2 + NADP(+). Its pathway is hormone biosynthesis; thyroid hormone biosynthesis. With respect to regulation, peroxidase activity is inhibited by aminobenzohydrazide. The NADPH oxidase activity is calcium-dependent. In terms of biological role, generates hydrogen peroxide which is required for the activity of thyroid peroxidase/TPO and lactoperoxidase/LPO. Plays a role in thyroid hormones synthesis and lactoperoxidase-mediated antimicrobial defense at the surface of mucosa. May have its own peroxidase activity through its N-terminal peroxidase-like domain. The sequence is that of Dual oxidase 1 (DUOX1) from Canis lupus familiaris (Dog).